A 465-amino-acid chain; its full sequence is Poly(A) polymerase I (465 aa).

Catalysis depends on residues Asp80, Asp82, and Asp162. Positions 430–465 (APPEQKGMLNELDDDPAPRRRRSRPRKRAPRREGTV) are disordered. A compositionally biased stretch (basic residues) spans 448 to 459 (RRRRSRPRKRAP).

This sequence belongs to the tRNA nucleotidyltransferase/poly(A) polymerase family.

The catalysed reaction is RNA(n) + ATP = RNA(n)-3'-adenine ribonucleotide + diphosphate. Functionally, adds poly(A) tail to the 3' end of many RNAs, which usually targets these RNAs for decay. Plays a significant role in the global control of gene expression, through influencing the rate of transcript degradation, and in the general RNA quality control. This is Poly(A) polymerase I from Salmonella typhimurium (strain LT2 / SGSC1412 / ATCC 700720).